The primary structure comprises 121 residues: Large ribosomal subunit protein bL12 (121 aa).

The protein belongs to the bacterial ribosomal protein bL12 family. Homodimer. Part of the ribosomal stalk of the 50S ribosomal subunit. Forms a multimeric L10(L12)X complex, where L10 forms an elongated spine to which 2 to 4 L12 dimers bind in a sequential fashion. Binds GTP-bound translation factors.

Its function is as follows. Forms part of the ribosomal stalk which helps the ribosome interact with GTP-bound translation factors. Is thus essential for accurate translation. This Lactococcus lactis subsp. lactis (strain IL1403) (Streptococcus lactis) protein is Large ribosomal subunit protein bL12.